The sequence spans 287 residues: NH(3)-dependent NAD(+) synthetase (287 aa).

53–60 lines the ATP pocket; sequence GISGGQDS. D59 provides a ligand contact to Mg(2+). R146 contributes to the deamido-NAD(+) binding site. T166 contributes to the ATP binding site. Residue E171 participates in Mg(2+) binding. Residues K179 and D186 each contribute to the deamido-NAD(+) site. ATP contacts are provided by K195 and T217. Deamido-NAD(+) is bound at residue 266–267; the sequence is HK.

It belongs to the NAD synthetase family. Homodimer.

It catalyses the reaction deamido-NAD(+) + NH4(+) + ATP = AMP + diphosphate + NAD(+) + H(+). It functions in the pathway cofactor biosynthesis; NAD(+) biosynthesis; NAD(+) from deamido-NAD(+) (ammonia route): step 1/1. Catalyzes the ATP-dependent amidation of deamido-NAD to form NAD. Uses ammonia as a nitrogen source. The chain is NH(3)-dependent NAD(+) synthetase from Deinococcus radiodurans (strain ATCC 13939 / DSM 20539 / JCM 16871 / CCUG 27074 / LMG 4051 / NBRC 15346 / NCIMB 9279 / VKM B-1422 / R1).